Here is a 354-residue protein sequence, read N- to C-terminus: 4-hydroxy-3-methylbut-2-en-1-yl diphosphate synthase (flavodoxin) (354 aa).

Positions 265, 268, 300, and 307 each coordinate [4Fe-4S] cluster.

Belongs to the IspG family. The cofactor is [4Fe-4S] cluster.

The enzyme catalyses (2E)-4-hydroxy-3-methylbut-2-enyl diphosphate + oxidized [flavodoxin] + H2O + 2 H(+) = 2-C-methyl-D-erythritol 2,4-cyclic diphosphate + reduced [flavodoxin]. The protein operates within isoprenoid biosynthesis; isopentenyl diphosphate biosynthesis via DXP pathway; isopentenyl diphosphate from 1-deoxy-D-xylulose 5-phosphate: step 5/6. Converts 2C-methyl-D-erythritol 2,4-cyclodiphosphate (ME-2,4cPP) into 1-hydroxy-2-methyl-2-(E)-butenyl 4-diphosphate. The chain is 4-hydroxy-3-methylbut-2-en-1-yl diphosphate synthase (flavodoxin) from Hydrogenobaculum sp. (strain Y04AAS1).